A 550-amino-acid chain; its full sequence is Gag-Pol polyprotein (550 aa).

Residue glycine 2 is the site of N-myristoyl glycine; by host attachment. The segment at 7 to 31 (VLSGGELDRWEKIRLRPGGKKQYRL) is interaction with Gp41. Residues 8 to 43 (LSGGELDRWEKIRLRPGGKKQYRLKHIVWASRKLER) are interaction with host CALM1. The interval 12–19 (ELDRWEKI) is interaction with host AP3D1. The tract at residues 14–33 (DRWEKIRLRPGGKKQYRLKH) is interaction with membrane phosphatidylinositol 4,5-bisphosphate and RNA. A Nuclear export signal motif is present at residues 16–22 (WEKIRLR). Positions 26–32 (KKQYRLK) match the Nuclear localization signal motif. An interaction with membrane phosphatidylinositol 4,5-bisphosphate region spans residues 73 to 77 (EELRS). The segment at 106-128 (EEQNKSKKKAQQAAADTGNSSQV) is disordered. At tyrosine 132 the chain carries Phosphotyrosine; by host. Residues 189 to 227 (NTVGGHQAAMQMLKETINEEAAEWDRLHPVHAGPIAPGQ) are interaction with human PPIA/CYPA and NUP153. Residues 277 to 363 (YSPISILDIR…GGPGHKARVL (87 aa)) form a dimerization/Multimerization of capsid protein p24 region. 2 CCHC-type zinc fingers span residues 390–407 (VKCFNCGKEGHIARNCKA) and 411–428 (KGCWKCGREGHQMKDCTE). Residues 444–464 (KAREFSSEQTRANSPTRGELQ) are disordered. A compositionally biased stretch (polar residues) spans 450 to 459 (SEQTRANSPT). Residues 489-493 (PQITL) form a dimerization of protease region. The region spanning 508–550 (KEALLDTGADDTVLEEINLPGRWKPKMIGGIGGFIKVRQYDEV) is the Peptidase A2 domain. Aspartate 513 functions as the For protease activity; shared with dimeric partner in the catalytic mechanism. The segment at 537–543 (GIGGFIK) is dimerization of protease.

In terms of assembly, homotrimer; further assembles as hexamers of trimers. Interacts with gp41 (via C-terminus). Interacts with host CALM1; this interaction induces a conformational change in the Matrix protein, triggering exposure of the myristate group. Interacts with host AP3D1; this interaction allows the polyprotein trafficking to multivesicular bodies during virus assembly. Part of the pre-integration complex (PIC) which is composed of viral genome, matrix protein, Vpr and integrase. Homodimer; the homodimer further multimerizes as homohexamers or homopentamers. Interacts with human PPIA/CYPA; This interaction stabilizes the capsid. Interacts with human NUP153. Interacts with host PDZD8; this interaction stabilizes the capsid. Interacts with monkey TRIM5; this interaction destabilizes the capsid. As to quaternary structure, homodimer, whose active site consists of two apposed aspartic acid residues. Post-translationally, specific enzymatic cleavages by the viral protease yield mature proteins. The protease is released by autocatalytic cleavage. The polyprotein is cleaved during and after budding, this process is termed maturation. Proteolytic cleavage of p66 RT removes the RNase H domain to yield the p51 RT subunit. Nucleocapsid protein p7 might be further cleaved after virus entry. Tyrosine phosphorylated presumably in the virion by a host kinase. Phosphorylation is apparently not a major regulator of membrane association. In terms of processing, phosphorylated possibly by host MAPK1; this phosphorylation is necessary for Pin1-mediated virion uncoating. Post-translationally, methylated by host PRMT6, impairing its function by reducing RNA annealing and the initiation of reverse transcription.

The protein resides in the host cell membrane. The protein localises to the host endosome. It localises to the host multivesicular body. It is found in the virion membrane. Its subcellular location is the host nucleus. The protein resides in the host cytoplasm. The protein localises to the virion. The catalysed reaction is Specific for a P1 residue that is hydrophobic, and P1' variable, but often Pro.. The viral protease is inhibited by many synthetic protease inhibitors (PIs), such as amprenavir, atazanavir, indinavir, loprinavir, nelfinavir, ritonavir and saquinavir. Use of protease inhibitors in tritherapy regimens permit more ambitious therapeutic strategies. In terms of biological role, mediates, with Gag polyprotein, the essential events in virion assembly, including binding the plasma membrane, making the protein-protein interactions necessary to create spherical particles, recruiting the viral Env proteins, and packaging the genomic RNA via direct interactions with the RNA packaging sequence (Psi). Gag-Pol polyprotein may regulate its own translation, by the binding genomic RNA in the 5'-UTR. At low concentration, the polyprotein would promote translation, whereas at high concentration, the polyprotein would encapsidate genomic RNA and then shut off translation. Its function is as follows. Targets the polyprotein to the plasma membrane via a multipartite membrane-binding signal, that includes its myristoylated N-terminus. Matrix protein is part of the pre-integration complex. Implicated in the release from host cell mediated by Vpu. Binds to RNA. Forms the conical core that encapsulates the genomic RNA-nucleocapsid complex in the virion. Most core are conical, with only 7% tubular. The core is constituted by capsid protein hexamer subunits. The core is disassembled soon after virion entry. Host restriction factors such as TRIM5-alpha or TRIMCyp bind retroviral capsids and cause premature capsid disassembly, leading to blocks in reverse transcription. Capsid restriction by TRIM5 is one of the factors which restricts HIV-1 to the human species. Host PIN1 apparently facilitates the virion uncoating. On the other hand, interactions with PDZD8 or CYPA stabilize the capsid. Functionally, encapsulates and protects viral dimeric unspliced genomic RNA (gRNA). Binds these RNAs through its zinc fingers. Acts as a nucleic acid chaperone which is involved in rearangement of nucleic acid secondary structure during gRNA retrotranscription. Also facilitates template switch leading to recombination. As part of the polyprotein, participates in gRNA dimerization, packaging, tRNA incorporation and virion assembly. In terms of biological role, aspartyl protease that mediates proteolytic cleavages of Gag and Gag-Pol polyproteins during or shortly after the release of the virion from the plasma membrane. Cleavages take place as an ordered, step-wise cascade to yield mature proteins. This process is called maturation. Displays maximal activity during the budding process just prior to particle release from the cell. Also cleaves Nef and Vif, probably concomitantly with viral structural proteins on maturation of virus particles. Hydrolyzes host EIF4GI and PABP1 in order to shut off the capped cellular mRNA translation. The resulting inhibition of cellular protein synthesis serves to ensure maximal viral gene expression and to evade host immune response. Also mediates cleavage of host YTHDF3. Mediates cleavage of host CARD8, thereby activating the CARD8 inflammasome, leading to the clearance of latent HIV-1 in patient CD4(+) T-cells after viral reactivation; in contrast, HIV-1 can evade CARD8-sensing when its protease remains inactive in infected cells prior to viral budding. This Human immunodeficiency virus type 1 group M subtype B (isolate CDC-451) (HIV-1) protein is Gag-Pol polyprotein (gag-pol).